A 378-amino-acid chain; its full sequence is Squalene methyltransferase 1 (378 aa).

The chain crosses the membrane as a helical span at residues 17-37; it reads LLTWKGVAGLVVAITLGYLII.

Belongs to the class I-like SAM-binding methyltransferase superfamily. Erg6/SMT family.

The protein localises to the microsome membrane. It catalyses the reaction squalene + 2 S-adenosyl-L-methionine = 3,22-dimethyl-1,2,23,24-tetradehydro-2,3,22,23-tetrahydrosqualene + 2 S-adenosyl-L-homocysteine + 2 H(+). Functionally, converts squalene to mono- and dimethyl derivatives, but not to tri- and tetramethylated products. Unable to methylate cycloartenol, zymosterol or lanosterol. Methylates both C-3 and C22 positions, but only C-3 position in monomethylated products. Produces mainly dimethylated squalene. This Botryococcus braunii (Green alga) protein is Squalene methyltransferase 1 (TMT-1).